Here is a 210-residue protein sequence, read N- to C-terminus: Rho-related GTP-binding protein RhoD (210 aa).

24–31 provides a ligand contact to GTP; that stretch reads GDGGCGKT. The Effector region motif lies at 46–54; that stretch reads YSPTVFERY. GTP-binding positions include 71-75 and 129-132; these read DTAGQ and CKID. Cysteine methyl ester is present on cysteine 207. The S-geranylgeranyl cysteine moiety is linked to residue cysteine 207. Residues 208–210 constitute a propeptide, removed in mature form; that stretch reads LAT.

It belongs to the small GTPase superfamily. Rho family. Interacts with PAK5. Interacts (in GTP-bound form) with DAPK3, FILIP1 and WHAMM. Interacts (independent of GTP-loaded status) with ANKFY1. Widely expressed.

It localises to the cell membrane. Its subcellular location is the early endosome. Involved in endosome dynamics. May coordinate membrane transport with the function of the cytoskeleton. Involved in the internalization and trafficking of activated tyrosine kinase receptors such as PDGFRB. Participates in the reorganization of actin cytoskeleton; the function seems to involve WHAMM and includes regulation of filopodia formation and actin filament bundling. Can modulate the effect of DAPK3 in reorganization of actin cytoskeleton and focal adhesion dissolution. The protein is Rho-related GTP-binding protein RhoD (Rhod) of Mus musculus (Mouse).